The following is a 430-amino-acid chain: Serine--tRNA ligase (430 aa).

235 to 237 (TAE) serves as a coordination point for L-serine. ATP contacts are provided by residues 266–268 (RRE) and Val-282. Glu-289 contacts L-serine. ATP is bound at residue 353 to 356 (EASS). Ser-389 serves as a coordination point for L-serine.

This sequence belongs to the class-II aminoacyl-tRNA synthetase family. Type-1 seryl-tRNA synthetase subfamily. Homodimer. The tRNA molecule binds across the dimer.

It localises to the cytoplasm. The enzyme catalyses tRNA(Ser) + L-serine + ATP = L-seryl-tRNA(Ser) + AMP + diphosphate + H(+). It carries out the reaction tRNA(Sec) + L-serine + ATP = L-seryl-tRNA(Sec) + AMP + diphosphate + H(+). It participates in aminoacyl-tRNA biosynthesis; selenocysteinyl-tRNA(Sec) biosynthesis; L-seryl-tRNA(Sec) from L-serine and tRNA(Sec): step 1/1. Catalyzes the attachment of serine to tRNA(Ser). Is also able to aminoacylate tRNA(Sec) with serine, to form the misacylated tRNA L-seryl-tRNA(Sec), which will be further converted into selenocysteinyl-tRNA(Sec). In Chlorobium phaeovibrioides (strain DSM 265 / 1930) (Prosthecochloris vibrioformis (strain DSM 265)), this protein is Serine--tRNA ligase.